Here is a 516-residue protein sequence, read N- to C-terminus: Methionine--tRNA ligase (516 aa).

Positions 14–24 (SYPNGKPHIGH) match the 'HIGH' region motif. The 'KMSKS' region signature appears at 302 to 306 (KMSKS). Lys305 contributes to the ATP binding site.

It belongs to the class-I aminoacyl-tRNA synthetase family. MetG type 2B subfamily. Monomer.

It localises to the cytoplasm. The enzyme catalyses tRNA(Met) + L-methionine + ATP = L-methionyl-tRNA(Met) + AMP + diphosphate. Is required not only for elongation of protein synthesis but also for the initiation of all mRNA translation through initiator tRNA(fMet) aminoacylation. The chain is Methionine--tRNA ligase from Rhizobium meliloti (strain 1021) (Ensifer meliloti).